The sequence spans 114 residues: U10-agatoxin-Ao1a (114 aa).

The N-terminal stretch at 1–15 (MCVATCLCTFAYVLA) is a signal peptide. Residues 16 to 32 (KSDEGENLISKVEETQR) constitute a propeptide that is removed on maturation. 5 cysteine pairs are disulfide-bonded: cysteine 34/cysteine 53, cysteine 41/cysteine 59, cysteine 50/cysteine 86, cysteine 52/cysteine 76, and cysteine 61/cysteine 74. Residues 95 to 114 (GSQNPSLCKDPNPRRRRHGK) are disordered.

This sequence belongs to the neurotoxin 04 (omega-agtx) family. 03 (type II/III omega-agtx) subfamily. Expressed by the venom gland.

The protein localises to the secreted. Inhibits voltage-gated calcium channels (Cav). The chain is U10-agatoxin-Ao1a from Agelena orientalis (Funnel-web spider).